We begin with the raw amino-acid sequence, 375 residues long: Erythronate-4-phosphate dehydrogenase (375 aa).

The substrate site is built by S45 and T66. NAD(+)-binding positions include D146, T175, 206–208, and D232; that span reads ASR. The active site involves R208. E237 is an active-site residue. The active-site Proton donor is H254. An NAD(+)-binding site is contributed by G257. Residue Y258 participates in substrate binding.

The protein belongs to the D-isomer specific 2-hydroxyacid dehydrogenase family. PdxB subfamily. Homodimer.

It localises to the cytoplasm. It catalyses the reaction 4-phospho-D-erythronate + NAD(+) = (R)-3-hydroxy-2-oxo-4-phosphooxybutanoate + NADH + H(+). The protein operates within cofactor biosynthesis; pyridoxine 5'-phosphate biosynthesis; pyridoxine 5'-phosphate from D-erythrose 4-phosphate: step 2/5. In terms of biological role, catalyzes the oxidation of erythronate-4-phosphate to 3-hydroxy-2-oxo-4-phosphonooxybutanoate. The protein is Erythronate-4-phosphate dehydrogenase of Proteus mirabilis (strain HI4320).